The sequence spans 62 residues: MSQQSLNAPGPGAEDGNDPEAVTGGQTFASAQAADDLLDEIDSVLESNAETFVRSFVQKGGQ.

The tract at residues 1 to 29 is disordered; that stretch reads MSQQSLNAPGPGAEDGNDPEAVTGGQTFA. Positions 21–56 are ARC ATPase binding; that stretch reads AVTGGQTFASAQAADDLLDEIDSVLESNAETFVRSF. A Deamidated glutamine modification is found at Q62. An Isoglutamyl lysine isopeptide (Gln-Lys) (interchain with K-? in acceptor proteins) cross-link involves residue Q62.

The protein belongs to the prokaryotic ubiquitin-like protein family. In terms of assembly, strongly interacts with the proteasome-associated ATPase ARC through a hydrophobic interface; the interacting region of Pup lies in its C-terminal half. There is one Pup binding site per ARC hexamer ring. Is modified by deamidation of its C-terminal glutamine to glutamate by the deamidase Dop, a prerequisite to the subsequent pupylation process.

Its pathway is protein degradation; proteasomal Pup-dependent pathway. In terms of biological role, protein modifier that is covalently attached to lysine residues of substrate proteins, thereby targeting them for proteasomal degradation. The tagging system is termed pupylation. In Brachybacterium faecium (strain ATCC 43885 / DSM 4810 / JCM 11609 / LMG 19847 / NBRC 14762 / NCIMB 9860 / 6-10), this protein is Prokaryotic ubiquitin-like protein Pup.